The chain runs to 128 residues: Sulfurtransferase TusD (128 aa).

The active-site Cysteine persulfide intermediate is the cysteine 78.

Belongs to the DsrE/TusD family. In terms of assembly, heterohexamer, formed by a dimer of trimers. The hexameric TusBCD complex contains 2 copies each of TusB, TusC and TusD. The TusBCD complex interacts with TusE.

Its subcellular location is the cytoplasm. In terms of biological role, part of a sulfur-relay system required for 2-thiolation of 5-methylaminomethyl-2-thiouridine (mnm(5)s(2)U) at tRNA wobble positions. Accepts sulfur from TusA and transfers it in turn to TusE. This Salmonella agona (strain SL483) protein is Sulfurtransferase TusD.